The primary structure comprises 383 residues: Cytochrome b (383 aa).

A run of 4 helical transmembrane segments spans residues Phe35–Met55, Trp79–Ile100, Trp115–Leu135, and Phe180–Phe200. Positions 85 and 99 each coordinate heme b. Residues His184 and His198 each coordinate heme b. Residue His203 participates in a ubiquinone binding. 4 helical membrane passes run Ile228–Phe248, Leu290–Asn310, Leu321–Lys341, and Phe348–Tyr368.

This sequence belongs to the cytochrome b family. In terms of assembly, the main subunits of complex b-c1 are: cytochrome b, cytochrome c1 and the Rieske protein. Heme b is required as a cofactor.

The protein localises to the mitochondrion inner membrane. Functionally, component of the ubiquinol-cytochrome c reductase complex (complex III or cytochrome b-c1 complex) that is part of the mitochondrial respiratory chain. The b-c1 complex mediates electron transfer from ubiquinol to cytochrome c. Contributes to the generation of a proton gradient across the mitochondrial membrane that is then used for ATP synthesis. This is Cytochrome b (MT-CYB) from Apis mellifera ligustica (Common honeybee).